We begin with the raw amino-acid sequence, 261 residues long: 3beta-hydroxysteroid dehydrogenase 1 (261 aa).

NAD(+) contacts are provided by residues 65 to 66 (DV), N92, Y158, and K162. Catalysis depends on Y158, which acts as the Proton acceptor.

It belongs to the short-chain dehydrogenases/reductases (SDR) family.

The enzyme catalyses 3-oxo-5beta-cholan-24-oate + NADH + H(+) = isolithocholate + NAD(+). It catalyses the reaction 12alpha-hydroxy-3-oxo-5beta-cholan-24-oate + NADH + H(+) = isodeoxycholate + NAD(+). The catalysed reaction is 7alpha,12alpha-dihydroxy-3-oxo-5beta-cholan-24-oate + NADH + H(+) = isocholate + NAD(+). It carries out the reaction 3-oxochenodeoxycholate + NADH + H(+) = isochenodeoxycholate + NAD(+). Functionally, involved in the modification of secondary bile acids into iso-bile acids (3beta-bile acids) via epimerization of the 3-OH group through a 3-oxo-intermediate. Catalyzes the reduction of 12-alpha-hydroxy-3-oxo-5-beta-cholan-24-oate (3-oxo-DCA) and 3-oxo-5-beta-cholan-24-oate (3-oxo-LCA) to yield isodeoxycholate (isoDCA) and isolithocholate (isoLCA), respectively. Is also able to catalyze the reduction of 3-dehydrocholate (3-oxo-CA or 7alpha,12alpha-dihydroxy-3-oxo-5beta-cholan-24-oate) and 7-alpha-hydroxy-3-oxo-5-beta-cholan-24-oate (3-oxo-CDCA), into isocholate (isoCA) and isochenodeoxycholate (isoCDCA), respectively. Prefers NADH to NADPH as cosubstrate. The conversion of the abundant bile acid deoxycholate (DCA) into isoDCA by the gut bacterium E.lenta favors the growth of the keystone commensal genus Bacteroides, since isoDCA is less cytotoxic than its parent compound, DCA; iso-bile acids have thus a potential role in modulating gut community composition. The sequence is that of 3beta-hydroxysteroid dehydrogenase 1 from Eggerthella lenta (strain ATCC 25559 / DSM 2243 / CCUG 17323 / JCM 9979 / KCTC 3265 / NCTC 11813 / VPI 0255 / 1899 B) (Eubacterium lentum).